The primary structure comprises 149 residues: 3-dehydroquinate dehydratase (149 aa).

Tyr-26 (proton acceptor) is an active-site residue. Residues Asn-77, His-83, and Asp-90 each coordinate substrate. The Proton donor role is filled by His-103. Residues 104 to 105 (LS) and Arg-114 each bind substrate.

The protein belongs to the type-II 3-dehydroquinase family. As to quaternary structure, homododecamer.

The catalysed reaction is 3-dehydroquinate = 3-dehydroshikimate + H2O. The protein operates within metabolic intermediate biosynthesis; chorismate biosynthesis; chorismate from D-erythrose 4-phosphate and phosphoenolpyruvate: step 3/7. Functionally, catalyzes a trans-dehydration via an enolate intermediate. In Aeromonas hydrophila subsp. hydrophila (strain ATCC 7966 / DSM 30187 / BCRC 13018 / CCUG 14551 / JCM 1027 / KCTC 2358 / NCIMB 9240 / NCTC 8049), this protein is 3-dehydroquinate dehydratase.